Here is a 349-residue protein sequence, read N- to C-terminus: Homeobox-leucine zipper protein HOX5 (349 aa).

The homeobox DNA-binding region spans 83–142; that stretch reads APEKKRRLTAEQVQMLERSFEEENKLEPERKTELARRLGMAPRQVAVWFQNRRARWKTKQ. Residues 141–185 are leucine-zipper; sequence KQLEHDFDRLKAAYDALAADHHALLSDNDRLRAQVISLTEKLQDK. The disordered stretch occupies residues 181 to 253; that stretch reads KLQDKETSPS…GTNDDGDGGA (73 aa). Low complexity predominate over residues 188–198; that stretch reads SPSSATITTAA.

This sequence belongs to the HD-ZIP homeobox family. Class I subfamily. As to quaternary structure, homodimer. May form a heterodimer with HOX4. In terms of tissue distribution, expressed in seedlings, roots, leaves, nodes, internodes, flowers and embryo.

The protein resides in the nucleus. Probable transcription activator that binds to the DNA sequence 5'-CAAT[AT]ATTG-3'. In Oryza sativa subsp. japonica (Rice), this protein is Homeobox-leucine zipper protein HOX5 (HOX5).